Here is an 854-residue protein sequence, read N- to C-terminus: Protein translocase subunit SecA (854 aa).

Residues glutamine 81, 99–103, and aspartate 487 each bind ATP; that span reads GEGKT.

Belongs to the SecA family. In terms of assembly, monomer and homodimer. Part of the essential Sec protein translocation apparatus which comprises SecA, SecYEG and auxiliary proteins SecDF. Other proteins may also be involved.

It localises to the cell membrane. Its subcellular location is the cytoplasm. The catalysed reaction is ATP + H2O + cellular proteinSide 1 = ADP + phosphate + cellular proteinSide 2.. Part of the Sec protein translocase complex. Interacts with the SecYEG preprotein conducting channel. Has a central role in coupling the hydrolysis of ATP to the transfer of proteins into and across the cell membrane, serving as an ATP-driven molecular motor driving the stepwise translocation of polypeptide chains across the membrane. This chain is Protein translocase subunit SecA, found in Mycoplasma mobile (strain ATCC 43663 / 163K / NCTC 11711) (Mesomycoplasma mobile).